Here is a 91-residue protein sequence, read N- to C-terminus: Small ribosomal subunit protein uS19 (91 aa).

This sequence belongs to the universal ribosomal protein uS19 family.

Protein S19 forms a complex with S13 that binds strongly to the 16S ribosomal RNA. In Ralstonia pickettii (strain 12J), this protein is Small ribosomal subunit protein uS19.